The sequence spans 151 residues: Arginine repressor (151 aa).

Belongs to the ArgR family.

The protein localises to the cytoplasm. Its pathway is amino-acid biosynthesis; L-arginine biosynthesis [regulation]. Its function is as follows. Regulates arginine biosynthesis genes. The polypeptide is Arginine repressor (Pelotomaculum thermopropionicum (strain DSM 13744 / JCM 10971 / SI)).